Here is a 551-residue protein sequence, read N- to C-terminus: MDSVRTFEACFLSTAAEITFFLKNITTTGNRAQSTKVVLNTLTAIVVVWICYRAVIYPKFISSLRHLPTAKRKYPLIGYGPAQFANSRGELFLEMAKAIPNEGLIRFHGFLETENLLLTSPEAIQEVLVKNSYNFIKPRGAKALFDRFLGSEVLFASEGPNHRNSKKHMQPPFNLSKVKILYSMFWDKAVKMSDDIGRSVIPSEKEILVTDVDMHAHNATLDAVMRALFGEKIEKSPYKHEILRLLDSVLGGSWDVTAYFMMTAFLPLWTLKLIPGGINDRVNFSSYRLRQSVRAFLNERKDESGSNKSDDIAMEMANSDYFTDDELVANLLGLMMAGIEPTAAGFVWIAWYLAIHPDWQTKVRNELKANIAHRFFTDDPTSFDAASVLESLPILNAVCNEGLRLKPPAPTSNRIAKFDTTILGHPVKAGTRIFISPFVSNRSEEFWGLTAAMYDPSRWLGDQKSGRKEVYNSRGGAATSTHCGFLPFLHGPRKCIGSIYAQAEMRAFIACLVGRFEFEMADKEEEMISAGILTSKPKGGLKLRLHKVKKW.

N-linked (GlcNAc...) asparagine glycosylation is present at asparagine 24. Residues 37 to 57 (VVLNTLTAIVVVWICYRAVIY) traverse the membrane as a helical segment. 5 N-linked (GlcNAc...) asparagine glycosylation sites follow: asparagine 174, asparagine 218, asparagine 283, asparagine 307, and asparagine 441. Heme is bound at residue cysteine 495.

Belongs to the cytochrome P450 family. It depends on heme as a cofactor.

It is found in the membrane. In terms of biological role, cytochrome P450 monooxygenase; part of the gene cluster that mediates the biosynthesis of abscisic acid (ABA), a phytohormone that acts antagonistically toward salicylic acid (SA), jasmonic acid (JA) and ethylene (ETH) signaling, to impede plant defense responses. The first step of the pathway catalyzes the reaction from farnesyl diphosphate to alpha-ionylideneethane performed by the alpha-ionylideneethane synthase abl3 via a three-step reaction mechanism involving 2 neutral intermediates, beta-farnesene and allofarnesene. The cytochrome P450 monooxygenase abl1 might then be involved in the conversion of alpha-ionylideneethane to alpha-ionylideneacetic acid. Alpha-ionylideneacetic acid is further converted to abscisic acid in 2 steps involving the cytochrome P450 monooxygenase abl2 and the short-chain dehydrogenase/reductase abl4, via the intermediates 1'-deoxy-ABA or 1',4'-trans-diol-ABA, depending on the order of action of these 2 enzymes. Abl2 is responsible for the hydroxylation of carbon atom C-1' and abl4 might be involved in the oxidation of the C-4' carbon atom. The cytochrome monooxygenase abl5 seems not essential for the biosynthesis of ABA and its function remains to be identified. The polypeptide is Cytochrome P450 monooxygenase abl5 (Leptosphaeria maculans (strain JN3 / isolate v23.1.3 / race Av1-4-5-6-7-8) (Blackleg fungus)).